Consider the following 580-residue polypeptide: Malto-oligosyltrehalose trehalohydrolase (580 aa).

The segment at 56–88 (LPDPRSARQPDGVHARSQRWEPPGQFGAARTDT) is disordered. A compositionally biased stretch (basic and acidic residues) spans 60-69 (RSARQPDGVH). A substrate-binding site is contributed by 245–250 (RLDAVH). Catalysis depends on aspartate 247, which acts as the Nucleophile. Catalysis depends on glutamate 284, which acts as the Proton donor. Residues 309–313 (DDIHH) and 379–384 (HDQVGN) each bind substrate.

The protein belongs to the glycosyl hydrolase 13 family.

It localises to the cytoplasm. The enzyme catalyses hydrolysis of (1-&gt;4)-alpha-D-glucosidic linkage in 4-alpha-D-[(1-&gt;4)-alpha-D-glucanosyl]n trehalose to yield trehalose and (1-&gt;4)-alpha-D-glucan.. Its pathway is glycan biosynthesis; trehalose biosynthesis. Its function is as follows. Is involved in the biosynthesis of trehalose but not in that of capsular glucan and glycogen. The protein is Malto-oligosyltrehalose trehalohydrolase (treZ) of Mycobacterium tuberculosis (strain CDC 1551 / Oshkosh).